A 154-amino-acid chain; its full sequence is Superoxide dismutase [Cu-Zn] (154 aa).

Cu cation contacts are provided by His47, His49, and His64. Cys58 and Cys147 form a disulfide bridge. Residues His64, His72, His81, and Asp84 each coordinate Zn(2+). Residue His121 participates in Cu cation binding.

Belongs to the Cu-Zn superoxide dismutase family. In terms of assembly, homodimer. The cofactor is Cu cation. Zn(2+) is required as a cofactor.

The protein resides in the cytoplasm. The catalysed reaction is 2 superoxide + 2 H(+) = H2O2 + O2. Functionally, destroys radicals which are normally produced within the cells and which are toxic to biological systems. The sequence is that of Superoxide dismutase [Cu-Zn] (SODCC) from Pinus sylvestris (Scotch pine).